We begin with the raw amino-acid sequence, 164 residues long: ATP synthase subunit b (164 aa).

The chain crosses the membrane as a helical span at residues 7-25; it reads SFWLAVSFIIFVYLIYRPA.

This sequence belongs to the ATPase B chain family. In terms of assembly, F-type ATPases have 2 components, F(1) - the catalytic core - and F(0) - the membrane proton channel. F(1) has five subunits: alpha(3), beta(3), gamma(1), delta(1), epsilon(1). F(0) has three main subunits: a(1), b(2) and c(10-14). The alpha and beta chains form an alternating ring which encloses part of the gamma chain. F(1) is attached to F(0) by a central stalk formed by the gamma and epsilon chains, while a peripheral stalk is formed by the delta and b chains.

Its subcellular location is the cell inner membrane. Its function is as follows. F(1)F(0) ATP synthase produces ATP from ADP in the presence of a proton or sodium gradient. F-type ATPases consist of two structural domains, F(1) containing the extramembraneous catalytic core and F(0) containing the membrane proton channel, linked together by a central stalk and a peripheral stalk. During catalysis, ATP synthesis in the catalytic domain of F(1) is coupled via a rotary mechanism of the central stalk subunits to proton translocation. Component of the F(0) channel, it forms part of the peripheral stalk, linking F(1) to F(0). The polypeptide is ATP synthase subunit b (Rickettsia felis (strain ATCC VR-1525 / URRWXCal2) (Rickettsia azadi)).